The sequence spans 514 residues: uncharacterized protein (514 aa).

Disordered stretches follow at residues 1–68 (MSSP…SESE), 109–244 (VPPP…RQAS), and 272–484 (RPAV…AQGC). Residues 368–384 (KPQKPKHSSPGKKPAGR) show a composition bias toward basic residues. Basic and acidic residues predominate over residues 385 to 405 (KTRESQAAAREDNDPNRDEVP).

This is an uncharacterized protein from Homo sapiens (Human).